Consider the following 50-residue polypeptide: Large ribosomal subunit protein bL33B (50 aa).

Belongs to the bacterial ribosomal protein bL33 family.

In Streptococcus agalactiae serotype V (strain ATCC BAA-611 / 2603 V/R), this protein is Large ribosomal subunit protein bL33B.